The primary structure comprises 33 residues: Photosystem II reaction center protein Psb30 (33 aa).

The helical transmembrane segment at 5–25 (VVAQLTVLALIVVSGPLVIGL) threads the bilayer.

It belongs to the Psb30/Ycf12 family. PSII is composed of 1 copy each of membrane proteins PsbA, PsbB, PsbC, PsbD, PsbE, PsbF, PsbH, PsbI, PsbJ, PsbK, PsbL, PsbM, PsbT, PsbX, PsbY, PsbZ, Psb30/Ycf12, peripheral proteins of the oxygen-evolving complex and a large number of cofactors. It forms dimeric complexes.

The protein resides in the plastid. It localises to the chloroplast thylakoid membrane. Its function is as follows. A core subunit of photosystem II (PSII), probably helps stabilize the reaction center. In Zygnema circumcarinatum (Green alga), this protein is Photosystem II reaction center protein Psb30.